Consider the following 767-residue polypeptide: Tetratricopeptide repeat protein 16 (767 aa).

TPR repeat units follow at residues 18 to 51 (VREY…DPKL), 53 to 85 (DFYV…DPGN), 93 to 126 (AFVL…QPQN), 128 to 155 (SFSY…REVK), 208 to 241 (AKQS…NPLD), 242 to 275 (PNFF…VTDT), 288 to 321 (LLTY…EQNE), 322 to 355 (KGLY…SPLD), and 363 to 396 (GVLQ…SPQK). Residues 612 to 733 (EVTPAYGQRD…DSLSFSEISS (122 aa)) are disordered. Residues 684–718 (QRSSQKVTKTPSLTHSTTHSDIGESANDTPGQTPW) are compositionally biased toward polar residues.

The chain is Tetratricopeptide repeat protein 16 (Ttc16) from Mus musculus (Mouse).